We begin with the raw amino-acid sequence, 96 residues long: Protein Vpr (96 aa).

A homooligomerization region spans residues Met-1 to Leu-42. Ser-79, Ser-94, and Ser-96 each carry phosphoserine; by host.

Belongs to the HIV-1 VPR protein family. Homooligomer, may form homodimer. Interacts with p6-gag region of the Pr55 Gag precursor protein through a (Leu-X-X)4 motif near the C-terminus of the P6gag protein. Interacts with host UNG. May interact with host RAD23A/HHR23A. Interacts with host VPRBP/DCAF1, leading to hijack the CUL4A-RBX1-DDB1-DCAF1/VPRBP complex, mediating ubiquitination of host proteins such as TERT and ZGPAT and arrest of the cell cycle in G2 phase. Post-translationally, phosphorylated on several residues by host. These phosphorylations regulate VPR activity for the nuclear import of the HIV-1 pre-integration complex.

It localises to the virion. Its subcellular location is the host nucleus. The protein localises to the host extracellular space. In terms of biological role, during virus replication, may deplete host UNG protein, and incude G2-M cell cycle arrest. Acts by targeting specific host proteins for degradation by the 26S proteasome, through association with the cellular CUL4A-DDB1 E3 ligase complex by direct interaction with host VPRPB/DCAF-1. Cell cycle arrest reportedly occurs within hours of infection and is not blocked by antiviral agents, suggesting that it is initiated by the VPR carried into the virion. Additionally, VPR induces apoptosis in a cell cycle dependent manner suggesting that these two effects are mechanistically linked. Detected in the serum and cerebrospinal fluid of AIDS patient, VPR may also induce cell death to bystander cells. Its function is as follows. During virus entry, plays a role in the transport of the viral pre-integration (PIC) complex to the host nucleus. This function is crucial for viral infection of non-dividing macrophages. May act directly at the nuclear pore complex, by binding nucleoporins phenylalanine-glycine (FG)-repeat regions. In Human immunodeficiency virus type 1 group M subtype B (isolate MN) (HIV-1), this protein is Protein Vpr.